A 149-amino-acid chain; its full sequence is Large ribosomal subunit protein bL9 (149 aa).

This sequence belongs to the bacterial ribosomal protein bL9 family.

In terms of biological role, binds to the 23S rRNA. The chain is Large ribosomal subunit protein bL9 from Acidothermus cellulolyticus (strain ATCC 43068 / DSM 8971 / 11B).